The primary structure comprises 109 residues: Large ribosomal subunit protein bL19 (109 aa).

It belongs to the bacterial ribosomal protein bL19 family.

In terms of biological role, this protein is located at the 30S-50S ribosomal subunit interface and may play a role in the structure and function of the aminoacyl-tRNA binding site. This is Large ribosomal subunit protein bL19 from Rubrobacter xylanophilus (strain DSM 9941 / JCM 11954 / NBRC 16129 / PRD-1).